Here is a 428-residue protein sequence, read N- to C-terminus: Adenylosuccinate synthetase (428 aa).

GTP-binding positions include 12-18 and 40-42; these read GDEGKGK and GHT. Catalysis depends on aspartate 13, which acts as the Proton acceptor. Positions 13 and 40 each coordinate Mg(2+). IMP-binding positions include 13–16, 38–41, threonine 128, arginine 142, glutamine 222, threonine 237, and arginine 301; these read DEGK and NAGH. Catalysis depends on histidine 41, which acts as the Proton donor. 297–303 contributes to the substrate binding site; the sequence is TVTGRSR. GTP contacts are provided by residues arginine 303, 329–331, and 411–413; these read KLD and STS.

The protein belongs to the adenylosuccinate synthetase family. Homodimer. Requires Mg(2+) as cofactor.

Its subcellular location is the cytoplasm. It catalyses the reaction IMP + L-aspartate + GTP = N(6)-(1,2-dicarboxyethyl)-AMP + GDP + phosphate + 2 H(+). It participates in purine metabolism; AMP biosynthesis via de novo pathway; AMP from IMP: step 1/2. Functionally, plays an important role in the de novo pathway of purine nucleotide biosynthesis. Catalyzes the first committed step in the biosynthesis of AMP from IMP. The polypeptide is Adenylosuccinate synthetase (Phenylobacterium zucineum (strain HLK1)).